The primary structure comprises 504 residues: Amidophosphoribosyltransferase (504 aa).

Cysteine 2 serves as the catalytic Nucleophile. In terms of domain architecture, Glutamine amidotransferase type-2 spans cysteine 2–glutamate 235. Mg(2+) contacts are provided by threonine 305, aspartate 367, and aspartate 368.

This sequence in the C-terminal section; belongs to the purine/pyrimidine phosphoribosyltransferase family. Mg(2+) serves as cofactor.

It carries out the reaction 5-phospho-beta-D-ribosylamine + L-glutamate + diphosphate = 5-phospho-alpha-D-ribose 1-diphosphate + L-glutamine + H2O. The protein operates within purine metabolism; IMP biosynthesis via de novo pathway; N(1)-(5-phospho-D-ribosyl)glycinamide from 5-phospho-alpha-D-ribose 1-diphosphate: step 1/2. Functionally, catalyzes the formation of phosphoribosylamine from phosphoribosylpyrophosphate (PRPP) and glutamine. The protein is Amidophosphoribosyltransferase of Pasteurella multocida (strain Pm70).